Consider the following 224-residue polypeptide: Synaptogyrin-2 (224 aa).

M1 is subject to N-acetylmethionine. Position 3 is a phosphoserine (S3). An MARVEL domain is found at 20 to 171 (FLKQPQVVVR…LAFLAYQRYK (152 aa)). 4 consecutive transmembrane segments (helical) span residues 26-46 (VVVR…IFGE), 73-93 (AIGV…IYFP), 105-125 (VIGD…GFCF), and 147-167 (AAIT…FLAY). Residues 196-224 (PGVPADTYQQPPFTQNAESTEGYQPPPVY) are disordered. A compositionally biased stretch (polar residues) spans 202-217 (TYQQPPFTQNAESTEG).

Belongs to the synaptogyrin family. In terms of processing, may be tyrosine phosphorylated by Src.

It localises to the cytoplasmic vesicle membrane. It is found in the cytoplasmic vesicle. Its subcellular location is the secretory vesicle. The protein resides in the synaptic vesicle membrane. In terms of biological role, may play a role in regulated exocytosis. In neuronal cells, modulates the localization of synaptophysin/SYP into synaptic-like microvesicles and may therefore play a role in the formation and/or the maturation of this vesicles. May also play a role in GLUT4 storage and transport to the plasma membrane. The chain is Synaptogyrin-2 from Bos taurus (Bovine).